The following is a 249-amino-acid chain: Exosome complex component Rrp4 (249 aa).

The 72-residue stretch at 73–144 folds into the S1 motif domain; it reads NDIVIGLVED…RSIDPVLSVK (72 aa). The KH domain maps to 154–211; sequence GIVIDIMPVKVPRVIGKNKSMYETLTSKSGCSIFVANNGRIWATCPSRFSEEILIEAI.

Belongs to the RRP4 family. In terms of assembly, component of the archaeal exosome complex. Forms a trimer of Rrp4 and/or Csl4 subunits. The trimer associates with a hexameric ring-like arrangement composed of 3 Rrp41-Rrp42 heterodimers.

It is found in the cytoplasm. Functionally, non-catalytic component of the exosome, which is a complex involved in RNA degradation. Increases the RNA binding and the efficiency of RNA degradation. Confers strong poly(A) specificity to the exosome. The protein is Exosome complex component Rrp4 of Saccharolobus solfataricus (strain ATCC 35092 / DSM 1617 / JCM 11322 / P2) (Sulfolobus solfataricus).